Consider the following 303-residue polypeptide: D-alanine--D-alanine ligase (303 aa).

Residues 104 to 300 enclose the ATP-grasp domain; sequence KLLWNAVGLP…FERLVERVLE (197 aa). 132–187 is an ATP binding site; that stretch reads IAKLGLPLFVKPASEGSSVGVSKVKTAEQLLPAIEEALKYDSIVLVEENLAGAEYS. Aspartate 254, glutamate 267, and asparagine 269 together coordinate Mg(2+).

This sequence belongs to the D-alanine--D-alanine ligase family. It depends on Mg(2+) as a cofactor. Mn(2+) serves as cofactor.

It localises to the cytoplasm. It carries out the reaction 2 D-alanine + ATP = D-alanyl-D-alanine + ADP + phosphate + H(+). Its pathway is cell wall biogenesis; peptidoglycan biosynthesis. Its function is as follows. Cell wall formation. The chain is D-alanine--D-alanine ligase from Glaesserella parasuis serovar 5 (strain SH0165) (Haemophilus parasuis).